The following is a 482-amino-acid chain: NADH-quinone oxidoreductase subunit D (482 aa).

Low complexity predominate over residues 1–16 (MTTNTSTSSTTDDLTT). Residues 1 to 48 (MTTNTSTSSTTDDLTTGAPNGTGAPDGANGVGGPTGTVGGPGEHPAYE) are disordered. The span at 29–42 (NGVGGPTGTVGGPG) shows a compositional bias: gly residues.

It belongs to the complex I 49 kDa subunit family. As to quaternary structure, NDH-1 is composed of 14 different subunits. Subunits NuoB, C, D, E, F, and G constitute the peripheral sector of the complex.

Its subcellular location is the cell membrane. It carries out the reaction a quinone + NADH + 5 H(+)(in) = a quinol + NAD(+) + 4 H(+)(out). Its function is as follows. NDH-1 shuttles electrons from NADH, via FMN and iron-sulfur (Fe-S) centers, to quinones in the respiratory chain. The immediate electron acceptor for the enzyme in this species is believed to be a menaquinone. Couples the redox reaction to proton translocation (for every two electrons transferred, four hydrogen ions are translocated across the cytoplasmic membrane), and thus conserves the redox energy in a proton gradient. The protein is NADH-quinone oxidoreductase subunit D of Frankia casuarinae (strain DSM 45818 / CECT 9043 / HFP020203 / CcI3).